The following is a 263-amino-acid chain: Glucosamine-6-phosphate deaminase (263 aa).

D72 (proton acceptor; for enolization step) is an active-site residue. The For ring-opening step role is filled by D141. The active-site Proton acceptor; for ring-opening step is H143. E148 serves as the catalytic For ring-opening step.

This sequence belongs to the glucosamine/galactosamine-6-phosphate isomerase family. NagB subfamily.

It catalyses the reaction alpha-D-glucosamine 6-phosphate + H2O = beta-D-fructose 6-phosphate + NH4(+). It participates in amino-sugar metabolism; N-acetylneuraminate degradation; D-fructose 6-phosphate from N-acetylneuraminate: step 5/5. Its activity is regulated as follows. Allosterically activated by N-acetylglucosamine 6-phosphate (GlcNAc6P). In terms of biological role, catalyzes the reversible isomerization-deamination of glucosamine 6-phosphate (GlcN6P) to form fructose 6-phosphate (Fru6P) and ammonium ion. This chain is Glucosamine-6-phosphate deaminase, found in Porphyromonas gingivalis (strain ATCC BAA-308 / W83).